Here is a 259-residue protein sequence, read N- to C-terminus: MAIHLVIIDALNLIRRVHSAQPNQDDIQAVITTTTRTINKILKETEPTHIIAVFDHHLQDRGWRAEILPQYKEDRKPMPEALQKGMDDIQEAWWKLGIDSLLSDGDEADDLVATLANKVAMHNEQVTIISTDKGYCQLLSPTLRIRDYFQHRWLDAPFVEKEFGLKPEQLADYWGLAGISSSKITGIPGVGPKAALEILTQFPTIEAANESEDLPKKYRKKFDEHYETAILCRQVAGLRTDIELGFNLQDIRYEKGTRD.

Asp109 provides a ligand contact to Mg(2+). The 5'-3' exonuclease domain maps to 165 to 255 (LKPEQLADYW…FNLQDIRYEK (91 aa)). Leu176, Ala177, Ile187, and Val190 together coordinate K(+). Positions 189 to 194 (GVGPKA) are interaction with DNA.

It belongs to the Xni family. It depends on Mg(2+) as a cofactor. K(+) is required as a cofactor.

Functionally, has flap endonuclease activity. During DNA replication, flap endonucleases cleave the 5'-overhanging flap structure that is generated by displacement synthesis when DNA polymerase encounters the 5'-end of a downstream Okazaki fragment. The sequence is that of Flap endonuclease Xni from Aliivibrio fischeri (strain ATCC 700601 / ES114) (Vibrio fischeri).